The chain runs to 199 residues: Superoxide dismutase [Mn/Fe] 2 (199 aa).

Residues His-27, His-81, Asp-161, and His-165 each contribute to the Fe(3+) site. Mn(2+) is bound by residues His-27, His-81, Asp-161, and His-165.

It belongs to the iron/manganese superoxide dismutase family. As to quaternary structure, homodimer. Can also form a heterodimer with SodA. It depends on Mn(2+) as a cofactor. Fe(3+) is required as a cofactor.

The enzyme catalyses 2 superoxide + 2 H(+) = H2O2 + O2. Functionally, destroys superoxide anion radicals which are normally produced within the cells and which are toxic to biological systems. Catalyzes the dismutation of superoxide anion radicals into O2 and H2O2 by successive reduction and oxidation of the transition metal ion at the active site. In Staphylococcus aureus (strain USA300), this protein is Superoxide dismutase [Mn/Fe] 2 (sodM).